A 95-amino-acid chain; its full sequence is Acylphosphatase (95 aa).

The 88-residue stretch at A7 to R94 folds into the Acylphosphatase-like domain. Active-site residues include R22 and N40. Residues V76–A88 are compositionally biased toward low complexity. Residues V76–G95 are disordered.

The protein belongs to the acylphosphatase family.

The catalysed reaction is an acyl phosphate + H2O = a carboxylate + phosphate + H(+). This chain is Acylphosphatase (acyP), found in Rhizobium meliloti (strain 1021) (Ensifer meliloti).